The following is a 421-amino-acid chain: MNTLQRRKTHQVLIDHITVGSEAPVVIQSMTNTDTADAKATALQIKELSDAGSEMVRITVNSPEAASKVAEIRRRLDDMGYATPLIGDFHFNGERLLAEFPECGKALSKYRINPGNVGKGVKGDEKFAFMIRTAAENDKAVRIGVNWGSLDQSLAKRMMDANLVSSAPKPPEEVMKEALIVSALESAEKAVLLGLPEDKIILSCKVSAVHDLIQVYRELGSRCVYPLHLGLTEAGMGSKGIVASTAALSVLLQEGIGDTIRISLTPEPGSPRTQEVVVGQEILQTMGLRSFTPMVTACPGCGRTTSTVFQELAQDVQNYLRQKMSIWRTLYPGVESLNVAVMGCVVNGPGESKLADIGISLPGTGETPVAPVYVDGERKVTLKGNNIASEFLAIVEEYVKTNYGKNSSKRNKGKVIPIQSL.

The [4Fe-4S] cluster site is built by cysteine 298, cysteine 301, cysteine 344, and glutamate 351.

This sequence belongs to the IspG family. [4Fe-4S] cluster serves as cofactor.

It carries out the reaction (2E)-4-hydroxy-3-methylbut-2-enyl diphosphate + oxidized [flavodoxin] + H2O + 2 H(+) = 2-C-methyl-D-erythritol 2,4-cyclic diphosphate + reduced [flavodoxin]. The protein operates within isoprenoid biosynthesis; isopentenyl diphosphate biosynthesis via DXP pathway; isopentenyl diphosphate from 1-deoxy-D-xylulose 5-phosphate: step 5/6. Its function is as follows. Converts 2C-methyl-D-erythritol 2,4-cyclodiphosphate (ME-2,4cPP) into 1-hydroxy-2-methyl-2-(E)-butenyl 4-diphosphate. The chain is 4-hydroxy-3-methylbut-2-en-1-yl diphosphate synthase (flavodoxin) from Neisseria gonorrhoeae (strain ATCC 700825 / FA 1090).